We begin with the raw amino-acid sequence, 151 residues long: 16.9 kDa class I heat shock protein 1 (151 aa).

In terms of domain architecture, sHSP spans 37-151 (ETAAFANARV…PEVKAIEISG (115 aa)).

The protein belongs to the small heat shock protein (HSP20) family. As to quaternary structure, may form oligomeric structures.

The protein resides in the cytoplasm. The sequence is that of 16.9 kDa class I heat shock protein 1 (hsp16.9A) from Triticum aestivum (Wheat).